Here is a 332-residue protein sequence, read N- to C-terminus: Transcription factor HBP-1b(c38) (332 aa).

The tract at residues 1-48 (MAEASPRTETSTDDTDENLMLEPGNAALAVVSDSSDRSRDKNGDQKTM) is disordered. A compositionally biased stretch (basic and acidic residues) spans 34-47 (SSDRSRDKNGDQKT). In terms of domain architecture, bZIP spans 44 to 107 (DQKTMRRLAQ…SSADQSHSMS (64 aa)). The tract at residues 46-66 (KTMRRLAQNREAARKSRLRKK) is basic motif. A coiled-coil region spans residues 47 to 142 (TMRRLAQNRE…RAAVNAHAGD (96 aa)). The leucine-zipper stretch occupies residues 72-86 (LENSRLKLTQLEQEL). Residues 111–329 (ALAFDTEYAR…RALSSLWLAR (219 aa)) form the DOG1 domain.

The protein belongs to the bZIP family. Binds DNA as a dimer.

It localises to the nucleus. Transcriptional activator that binds specifically to the DNA sequence 5'-TGACG-3'. Recognizes ocs elements like the as-1 motif of the cauliflower mosaic virus 35S promoter. Binding to the as-1-like cis elements mediate auxin- and salicylic acid-inducible transcription. Binds to the hexamer motif 5'-ACGTCA-3' of histone gene promoters. The chain is Transcription factor HBP-1b(c38) from Triticum aestivum (Wheat).